We begin with the raw amino-acid sequence, 1022 residues long: Protein translocase subunit SecA (1022 aa).

ATP-binding positions include Q143, G161–T165, and D661. The interval A973 to R1001 is disordered. Zn(2+)-binding residues include C1005, C1007, C1016, and H1017.

This sequence belongs to the SecA family. In terms of assembly, monomer and homodimer. Part of the essential Sec protein translocation apparatus which comprises SecA, SecYEG and auxiliary proteins SecDF. Other proteins may also be involved. The cofactor is Zn(2+).

Its subcellular location is the cell inner membrane. It is found in the cytoplasm. It carries out the reaction ATP + H2O + cellular proteinSide 1 = ADP + phosphate + cellular proteinSide 2.. Functionally, part of the Sec protein translocase complex. Interacts with the SecYEG preprotein conducting channel. Has a central role in coupling the hydrolysis of ATP to the transfer of proteins into and across the cell membrane, serving as an ATP-driven molecular motor driving the stepwise translocation of polypeptide chains across the membrane. The polypeptide is Protein translocase subunit SecA (Chlorobium phaeobacteroides (strain DSM 266 / SMG 266 / 2430)).